The primary structure comprises 500 residues: Trehalose-6-phosphate synthase (500 aa).

D-glucose 6-phosphate is bound at residue Arg-28. 48–49 (GG) is a UDP-alpha-D-glucose binding site. 2 residues coordinate D-glucose 6-phosphate: Tyr-108 and Asp-162. 2 residues coordinate UDP-alpha-D-glucose: Arg-304 and Lys-309. D-glucose 6-phosphate is bound at residue Arg-342. 407–411 (LVAKE) lines the UDP-alpha-D-glucose pocket.

This sequence belongs to the glycosyltransferase 20 family. In terms of assembly, homotetramer.

The enzyme catalyses ADP-alpha-D-glucose + D-glucose 6-phosphate = alpha,alpha-trehalose 6-phosphate + ADP + H(+). It carries out the reaction CDP-alpha-D-glucose + D-glucose 6-phosphate = alpha,alpha-trehalose 6-phosphate + CDP + H(+). The catalysed reaction is GDP-alpha-D-glucose + D-glucose 6-phosphate = alpha,alpha-trehalose 6-phosphate + GDP + H(+). It catalyses the reaction TDP-alpha-D-glucose + D-glucose 6-phosphate = 5-methyl-UDP + alpha,alpha-trehalose 6-phosphate + H(+). The enzyme catalyses D-glucose 6-phosphate + UDP-alpha-D-glucose = alpha,alpha-trehalose 6-phosphate + UDP + H(+). It participates in glycan biosynthesis; trehalose biosynthesis. In terms of biological role, probably involved in the osmoprotection via the biosynthesis of trehalose and in the production of glycogen and alpha-glucan via the TreS-Pep2 branch involved in the biosynthesis of maltose-1-phosphate (M1P). Catalyzes the transfer of glucose from UDP-glucose (UDP-Glc) to D-glucose 6-phosphate (Glc-6-P) to form trehalose-6-phosphate. Probably also able to use ADP-Glc, CDP-Glc, GDP-Glc and TDP-Glc as glucosyl donors. The protein is Trehalose-6-phosphate synthase of Mycobacterium bovis (strain ATCC BAA-935 / AF2122/97).